A 396-amino-acid polypeptide reads, in one-letter code: Agropine synthesis cyclase (396 aa).

Belongs to the peptidase M24B family.

The polypeptide is Agropine synthesis cyclase (ags) (Rhizobium rhizogenes (Agrobacterium rhizogenes)).